Reading from the N-terminus, the 702-residue chain is NAD(P)H-quinone oxidoreductase subunit 5, chloroplastic (702 aa).

The next 15 membrane-spanning stretches (helical) occupy residues 1 to 21 (WVIP…LFFI), 31 to 51 (IWAF…VHLS), 81 to 101 (IDPL…LVLI), 117 to 137 (FVYI…SNLI), 139 to 159 (IYFF…FWFT), 177 to 197 (GDFG…SLEF), 211 to 231 (NGIN…GAVA), 250 to 270 (TPIS…FLLA), 272 to 292 (LFPL…VGTI), 319 to 339 (LGYM…FHLI), 346 to 366 (ALLF…VGYS), 388 to 408 (TTFL…CFWS), 417 to 437 (WLYS…TAFY), 534 to 554 (LFPL…GISF), and 602 to 622 (SLAI…YSFF).

Belongs to the complex I subunit 5 family. NDH is composed of at least 16 different subunits, 5 of which are encoded in the nucleus.

The protein localises to the plastid. The protein resides in the chloroplast thylakoid membrane. It carries out the reaction a plastoquinone + NADH + (n+1) H(+)(in) = a plastoquinol + NAD(+) + n H(+)(out). The enzyme catalyses a plastoquinone + NADPH + (n+1) H(+)(in) = a plastoquinol + NADP(+) + n H(+)(out). In terms of biological role, NDH shuttles electrons from NAD(P)H:plastoquinone, via FMN and iron-sulfur (Fe-S) centers, to quinones in the photosynthetic chain and possibly in a chloroplast respiratory chain. The immediate electron acceptor for the enzyme in this species is believed to be plastoquinone. Couples the redox reaction to proton translocation, and thus conserves the redox energy in a proton gradient. The chain is NAD(P)H-quinone oxidoreductase subunit 5, chloroplastic (ndhF) from Poa pratensis (Kentucky bluegrass).